Consider the following 314-residue polypeptide: Thymidylate synthase (314 aa).

Residues Arg21 and 176-177 (RR) contribute to the dUMP site. The active-site Nucleophile is Cys196. Residues 216–219 (RSAD), Asn227, and 257–259 (HLY) each bind dUMP. (6R)-5,10-methylene-5,6,7,8-tetrahydrofolate is bound at residue Asp219. Residue Ser313 participates in (6R)-5,10-methylene-5,6,7,8-tetrahydrofolate binding.

This sequence belongs to the thymidylate synthase family. Bacterial-type ThyA subfamily. In terms of assembly, homodimer.

It is found in the cytoplasm. The enzyme catalyses dUMP + (6R)-5,10-methylene-5,6,7,8-tetrahydrofolate = 7,8-dihydrofolate + dTMP. The protein operates within pyrimidine metabolism; dTTP biosynthesis. In terms of biological role, catalyzes the reductive methylation of 2'-deoxyuridine-5'-monophosphate (dUMP) to 2'-deoxythymidine-5'-monophosphate (dTMP) while utilizing 5,10-methylenetetrahydrofolate (mTHF) as the methyl donor and reductant in the reaction, yielding dihydrofolate (DHF) as a by-product. This enzymatic reaction provides an intracellular de novo source of dTMP, an essential precursor for DNA biosynthesis. This is Thymidylate synthase from Listeria monocytogenes serotype 4b (strain F2365).